Here is a 94-residue protein sequence, read N- to C-terminus: Small ubiquitin-related modifier 3-like (94 aa).

A Glycyl lysine isopeptide (Lys-Gly) (interchain with G-Cter in SUMO) cross-link involves residue Lys11. The Ubiquitin-like domain occupies 15 to 92 (DHINLKVAGQ…IDVFQQQTGG (78 aa)). A Glycyl lysine isopeptide (Gly-Lys) (interchain with K-? in acceptor proteins) cross-link involves residue Gly92. The propeptide occupies 93 to 94 (SC).

This sequence belongs to the ubiquitin family. SUMO subfamily. As to quaternary structure, interacts with sae2 and ube2i. Covalently attached to a number of proteins. Post-translationally, polymeric chains can be formed through Lys-11 cross-linking. Cleavage of precursor form by a sentrin-specific protease is necessary for function.

The protein localises to the cytoplasm. It localises to the nucleus. Its subcellular location is the PML body. Functionally, ubiquitin-like protein which can be covalently attached to target lysines either as a monomer or as a lysine-linked polymer. Does not seem to be involved in protein degradation and may function as an antagonist of ubiquitin in the degradation process. Plays a role in a number of cellular processes such as nuclear transport, DNA replication and repair, mitosis and signal transduction. Covalent attachment to its substrates requires prior activation by the E1 complex sae1-sae2 and linkage to the E2 enzyme ube2i. The chain is Small ubiquitin-related modifier 3-like (sumo3l) from Danio rerio (Zebrafish).